Consider the following 458-residue polypeptide: Protein TESPA1 (458 aa).

A Phosphoserine modification is found at S312. The segment covering 328–339 (KIQQDPEHRQAL) has biased composition (basic and acidic residues). Disordered stretches follow at residues 328–356 (KIQQ…STSS) and 439–458 (LPTI…LTNL). 2 stretches are compositionally biased toward polar residues: residues 346 to 356 (PIQNTNPSTSS) and 439 to 450 (LPTIQQKQNQGQ).

In terms of assembly, interacts with PLCG1 and GRB2; the association is increased with prolonged stimulation of the TCR and may facilitate the assembly of the LAT signalosome. Interacts with ITPR1 and ITPR3. Interacts with HSPA9. Post-translationally, may be phosphorylated in response to store-operated Ca(+2) entry. As to expression, expressed in lymphoid tissues, with highest expression levels detected in thymus and lower levels in spleen and lymph nodes (at protein level). Detected in CD4(+) and CD8(+) T-cells, B-cells and mast cells. Not detected in monocytes/macrophages.

The protein resides in the cytoplasm. It is found in the endoplasmic reticulum membrane. Its function is as follows. May play a role in the regulation of inositol 1,4,5-trisphosphate receptor-mediated Ca(2+) release and mitochondrial Ca(2+) uptake via the mitochondria-associated endoplasmic reticulum membrane (MAM) compartment. Required for the development and maturation of T-cells, its function being essential for the late stages of thymocyte development. Plays a role in T-cell antigen receptor (TCR)-mediated activation of the ERK and NFAT signaling pathways, possibly by serving as a scaffolding protein that promotes the assembly of the LAT signalosome in thymocytes. The protein is Protein TESPA1 (Tespa1) of Mus musculus (Mouse).